We begin with the raw amino-acid sequence, 710 residues long: Mitochondrial intermediate peptidase (710 aa).

Residues Met1–Ser33 constitute a mitochondrion transit peptide. The residue at position 124 (Lys124) is an N6-acetyllysine. His492 serves as a coordination point for Zn(2+). Glu493 is a catalytic residue. 2 residues coordinate Zn(2+): His496 and His499.

This sequence belongs to the peptidase M3 family. As to quaternary structure, monomer. It depends on Zn(2+) as a cofactor.

Its subcellular location is the mitochondrion matrix. It carries out the reaction Release of an N-terminal octapeptide as second stage of processing of some proteins imported into the mitochondrion.. With respect to regulation, activity is divalent cation-dependent. It is stimulated by manganese, magnesium or calcium ions and reversibly inhibited by zinc, cobalt and iron. Its function is as follows. Cleaves proteins, imported into the mitochondrion, to their mature size. The protein is Mitochondrial intermediate peptidase (Mipep) of Rattus norvegicus (Rat).